The sequence spans 190 residues: Corticoliberin (190 aa).

Positions Met-1 to Ala-24 are cleaved as a signal peptide. Residues Leu-25–Arg-147 constitute a propeptide that is removed on maturation. Disordered regions lie at residues Gly-33–Gln-57 and Arg-116–Pro-151. At Ala-188 the chain carries Alanine amide.

It belongs to the sauvagine/corticotropin-releasing factor/urotensin I family. In terms of assembly, interacts (via C-terminus) with CRFR1 (via N-terminal extracellular domain). In terms of tissue distribution, produced by the hypothalamus.

The protein localises to the secreted. In terms of biological role, hormone regulating the release of corticotropin from pituitary gland. Induces NLRP6 in intestinal epithelial cells, hence may influence gut microbiota profile. This Bos taurus (Bovine) protein is Corticoliberin (CRH).